The following is a 66-amino-acid chain: U-scoloptoxin(24)-Er2a (66 aa).

An N-terminal signal peptide occupies residues 1–23 (MVKPLHCLIGIVLFLAVLNAGNG). The interval 43–66 (SLFHGNQRKKRSEEKRFSDMEQTK) is disordered. Basic and acidic residues predominate over residues 53–66 (RSEEKRFSDMEQTK).

It belongs to the scoloptoxin-24 family. In terms of tissue distribution, expressed by the venom gland.

The protein localises to the secreted. This chain is U-scoloptoxin(24)-Er2a, found in Ethmostigmus rubripes (Giant centipede).